A 283-amino-acid polypeptide reads, in one-letter code: 4-diphosphocytidyl-2-C-methyl-D-erythritol kinase (283 aa).

The active site involves Lys10. 99–109 (PMGGGLGGGSS) is a binding site for ATP. Asp141 is a catalytic residue.

The protein belongs to the GHMP kinase family. IspE subfamily. In terms of assembly, homodimer.

It catalyses the reaction 4-CDP-2-C-methyl-D-erythritol + ATP = 4-CDP-2-C-methyl-D-erythritol 2-phosphate + ADP + H(+). Its pathway is isoprenoid biosynthesis; isopentenyl diphosphate biosynthesis via DXP pathway; isopentenyl diphosphate from 1-deoxy-D-xylulose 5-phosphate: step 3/6. Its function is as follows. Catalyzes the phosphorylation of the position 2 hydroxy group of 4-diphosphocytidyl-2C-methyl-D-erythritol. The protein is 4-diphosphocytidyl-2-C-methyl-D-erythritol kinase of Salmonella gallinarum (strain 287/91 / NCTC 13346).